The chain runs to 288 residues: uncharacterized protein (288 aa).

The segment covering 126-136 (VAAPASTPVAP) has biased composition (low complexity). 2 disordered regions span residues 126–227 (VAAP…VTSV) and 258–288 (KEKD…SSEE). Residues 143–152 (RKEFKNEKWK) show a composition bias toward basic and acidic residues. Residues 153-162 (DKKKQGRRRN) show a composition bias toward basic residues. A compositionally biased stretch (acidic residues) spans 180–194 (VAEECLQESSSEEGD). Basic and acidic residues predominate over residues 278 to 288 (TLVHDRISSEE).

It belongs to the chlamydial CPn_0623/CT_504/TC_0791 family.

This is an uncharacterized protein from Chlamydia trachomatis serovar D (strain ATCC VR-885 / DSM 19411 / UW-3/Cx).